The chain runs to 112 residues: MAAQTSIRRKLRARRKVRIAAGERPRLSVFRSSKHIYAQIIDDKNGTTLAAASSAVVKAGNKTDTAAAVGKALAEAASAKGVKQVVFDRGQYKYHGRVKALADAAREGGLDF.

Belongs to the universal ribosomal protein uL18 family. As to quaternary structure, part of the 50S ribosomal subunit; part of the 5S rRNA/L5/L18/L25 subcomplex. Contacts the 5S and 23S rRNAs.

Its function is as follows. This is one of the proteins that bind and probably mediate the attachment of the 5S RNA into the large ribosomal subunit, where it forms part of the central protuberance. This Deinococcus deserti (strain DSM 17065 / CIP 109153 / LMG 22923 / VCD115) protein is Large ribosomal subunit protein uL18.